We begin with the raw amino-acid sequence, 347 residues long: Ribosomal RNA small subunit methyltransferase C (347 aa).

Belongs to the methyltransferase superfamily. RsmC family. Monomer.

The protein localises to the cytoplasm. It carries out the reaction guanosine(1207) in 16S rRNA + S-adenosyl-L-methionine = N(2)-methylguanosine(1207) in 16S rRNA + S-adenosyl-L-homocysteine + H(+). Specifically methylates the guanine in position 1207 of 16S rRNA in the 30S particle. The chain is Ribosomal RNA small subunit methyltransferase C from Shewanella baltica (strain OS155 / ATCC BAA-1091).